The primary structure comprises 440 residues: UDP-N-acetylmuramoylalanine--D-glutamate ligase (440 aa).

113-119 (GTNGKST) provides a ligand contact to ATP.

The protein belongs to the MurCDEF family.

The protein localises to the cytoplasm. It catalyses the reaction UDP-N-acetyl-alpha-D-muramoyl-L-alanine + D-glutamate + ATP = UDP-N-acetyl-alpha-D-muramoyl-L-alanyl-D-glutamate + ADP + phosphate + H(+). It functions in the pathway cell wall biogenesis; peptidoglycan biosynthesis. In terms of biological role, cell wall formation. Catalyzes the addition of glutamate to the nucleotide precursor UDP-N-acetylmuramoyl-L-alanine (UMA). In Buchnera aphidicola subsp. Acyrthosiphon pisum (strain Tuc7), this protein is UDP-N-acetylmuramoylalanine--D-glutamate ligase.